The sequence spans 106 residues: GQPKAAPSVTLFPPSSEELQANKATLVCLVSDFNPGAVTVAWKADGSPVKVGVETTKPSKQSNNKYAASSYLSLTPEQWKSHRSYSCRVTHEGSTVEKTVAPAECS.

The Ig-like domain occupies 7-101 (PSVTLFPPSS…EGSTVEKTVA (95 aa)). Cys-28 and Cys-87 are joined by a disulfide.

As to quaternary structure, immunoglobulins are composed of two identical heavy chains and two identical light chains; disulfide-linked.

The protein resides in the secreted. The protein localises to the cell membrane. In terms of biological role, constant region of immunoglobulin light chains. Immunoglobulins, also known as antibodies, are membrane-bound or secreted glycoproteins produced by B lymphocytes. In the recognition phase of humoral immunity, the membrane-bound immunoglobulins serve as receptors which, upon binding of a specific antigen, trigger the clonal expansion and differentiation of B lymphocytes into immunoglobulins-secreting plasma cells. Secreted immunoglobulins mediate the effector phase of humoral immunity, which results in the elimination of bound antigens. The antigen binding site is formed by the variable domain of one heavy chain, together with that of its associated light chain. Thus, each immunoglobulin has two antigen binding sites with remarkable affinity for a particular antigen. The variable domains are assembled by a process called V-(D)-J rearrangement and can then be subjected to somatic hypermutations which, after exposure to antigen and selection, allow affinity maturation for a particular antigen. This is Immunoglobulin lambda constant 7 from Homo sapiens (Human).